The sequence spans 1017 residues: Probable isoleucine--tRNA ligase, cytoplasmic (1017 aa).

Residues Pro45 to His55 carry the 'HIGH' region motif. A 'KMSKS' region motif is present at residues Lys609–Arg613. Lys612 serves as a coordination point for ATP.

It belongs to the class-I aminoacyl-tRNA synthetase family.

It is found in the cytoplasm. The catalysed reaction is tRNA(Ile) + L-isoleucine + ATP = L-isoleucyl-tRNA(Ile) + AMP + diphosphate. This is Probable isoleucine--tRNA ligase, cytoplasmic from Encephalitozoon cuniculi (strain GB-M1) (Microsporidian parasite).